A 415-amino-acid polypeptide reads, in one-letter code: Protein PIN-LIKES 4 (415 aa).

Residues 1–13 (MKLLELFIASSKP) are Lumenal-facing. A helical transmembrane segment spans residues 14-34 (VVETLLITSVGFYLALDTVNL). Residues 35-44 (LGHDARKHLN) lie on the Cytoplasmic side of the membrane. The helical transmembrane segment at 45 to 61 (NIVFYVFSPSLIGSRLA) threads the bilayer. Residues 62–75 (DSVTYESLVKMWFM) lie on the Lumenal side of the membrane. Residues 76–96 (PVNVLLTFMIGSLLGWIVIVI) traverse the membrane as a helical segment. The Cytoplasmic segment spans residues 97 to 106 (TKPPSQLRGL). The helical transmembrane segment at 107–127 (IISCCASGNLGTMPLIIIPAI) threads the bilayer. At 128–143 (CKEKGGPFGDSESCEK) the chain is on the lumenal side. The chain crosses the membrane as a helical span at residues 144–161 (YGMGYVTLSMTAFFISVY). Residues 162 to 244 (KHDTNWYVSG…RVVSLSKKVN (83 aa)) lie on the Cytoplasmic side of the membrane. Residues 245 to 265 (LGSIFAPATIAAIIALVIGLI) traverse the membrane as a helical segment. Over 266–285 (TPLRNLIIGTVAPFRVIQDS) the chain is Lumenal. The chain crosses the membrane as a helical span at residues 286–306 (LTLLGDGAIPAMTLILGGNLL). Over 307–322 (KGMRRSEVRSSEMKNS) the chain is Cytoplasmic. Residues 323–343 (CIIGVLVARYILLPVSGVLLV) traverse the membrane as a helical segment. The Lumenal portion of the chain corresponds to 344–355 (RGAYKLDLVTSE). The chain crosses the membrane as a helical span at residues 356 to 376 (PLYQFVLLLQYAVPPAMNLGT). Residues 377–389 (KTQLFGAGESECS) are Cytoplasmic-facing. The chain crosses the membrane as a helical span at residues 390–410 (VIMLWTYSLAAVSLTVWPTFF). The Lumenal segment spans residues 411–415 (MWLVT).

The protein belongs to the auxin efflux carrier (TC 2.A.69.2) family. As to expression, expressed in seedlings, rosette and cauline leaves, stems, flowers and siliques.

It localises to the endoplasmic reticulum membrane. In terms of biological role, involved in cellular auxin homeostasis by regulating auxin metabolism. Regulates intracellular auxin accumulation at the endoplasmic reticulum and thus auxin availability for nuclear auxin signaling. This Arabidopsis thaliana (Mouse-ear cress) protein is Protein PIN-LIKES 4.